Reading from the N-terminus, the 328-residue chain is Malate dehydrogenase (328 aa).

12–18 (GAAGQIG) is a binding site for NAD(+). Substrate is bound by residues Arg95 and Arg101. NAD(+)-binding positions include Asn108, Gln115, and 132 to 134 (VGN). Substrate contacts are provided by Asn134 and Arg165. The active-site Proton acceptor is the His190.

It belongs to the LDH/MDH superfamily. MDH type 2 family.

The catalysed reaction is (S)-malate + NAD(+) = oxaloacetate + NADH + H(+). In terms of biological role, catalyzes the reversible oxidation of malate to oxaloacetate. The polypeptide is Malate dehydrogenase (Acidovorax ebreus (strain TPSY) (Diaphorobacter sp. (strain TPSY))).